The chain runs to 323 residues: Acetyl-coenzyme A carboxylase carboxyl transferase subunit alpha (323 aa).

A CoA carboxyltransferase C-terminal domain is found at 39–293; the sequence is RLAGKSQQLT…KRSLAESLRQ (255 aa).

It belongs to the AccA family. Acetyl-CoA carboxylase is a heterohexamer composed of biotin carboxyl carrier protein (AccB), biotin carboxylase (AccC) and two subunits each of ACCase subunit alpha (AccA) and ACCase subunit beta (AccD).

Its subcellular location is the cytoplasm. It catalyses the reaction N(6)-carboxybiotinyl-L-lysyl-[protein] + acetyl-CoA = N(6)-biotinyl-L-lysyl-[protein] + malonyl-CoA. It participates in lipid metabolism; malonyl-CoA biosynthesis; malonyl-CoA from acetyl-CoA: step 1/1. Its function is as follows. Component of the acetyl coenzyme A carboxylase (ACC) complex. First, biotin carboxylase catalyzes the carboxylation of biotin on its carrier protein (BCCP) and then the CO(2) group is transferred by the carboxyltransferase to acetyl-CoA to form malonyl-CoA. This Cupriavidus pinatubonensis (strain JMP 134 / LMG 1197) (Cupriavidus necator (strain JMP 134)) protein is Acetyl-coenzyme A carboxylase carboxyl transferase subunit alpha.